Here is a 55-residue protein sequence, read N- to C-terminus: Hydrophobic protein LTI6B (55 aa).

2 helical membrane passes run 8-28 (IDIL…FGCG) and 31-51 (FWIC…YAIY).

Belongs to the UPF0057 (PMP3) family.

It localises to the membrane. Plays a role in the regulation of membrane potential. Could mediate a proton leak. In Oryza sativa subsp. indica (Rice), this protein is Hydrophobic protein LTI6B (LTI6B).